We begin with the raw amino-acid sequence, 282 residues long: Phospholipid phosphatase 1 (282 aa).

Over 1 to 6 the chain is Cytoplasmic; the sequence is MFDKPR. Residues 5–7 carry the PDZ-binding; involved in localization to the apical cell membrane motif; it reads PRL. Residues 7-27 form a helical membrane-spanning segment; the sequence is LPYVVLDVICVLLAGLPFIIL. Over 28-53 the chain is Extracellular; that stretch reads TSRHTPFQRGVFCTDESIKYPYREDT. Residues 54–74 traverse the membrane as a helical segment; the sequence is IPYALLGGIVIPFCIIVMITG. Residues 75 to 88 are Cytoplasmic-facing; sequence ETLSVYFNVLHSNS. A helical membrane pass occupies residues 89–109; it reads FVSNHYIATIYKAVGAFLFGA. Over 110–164 the chain is Extracellular; the sequence is SASQSLTDIAKYSIGRLRPHFLAVCNPDWSKINCSDGYIENFVCQGNEQKVREGR. Positions 120-128 are phosphatase sequence motif I; that stretch reads KYSIGRLRP. N-linked (GlcNAc...) asparagine glycosylation is present at Asn-142. The helical transmembrane segment at 165–185 threads the bilayer; that stretch reads LSFYSGHSSFSMYCMLFVALY. Positions 168–171 are phosphatase sequence motif II; the sequence is YSGH. The Proton donors role is filled by His-171. Residues 186-194 lie on the Cytoplasmic side of the membrane; the sequence is LQARMKGDW. The helical transmembrane segment at 195-215 threads the bilayer; that stretch reads ARLLRPMLQFGLVALSIYVGL. A phosphatase sequence motif III region spans residues 216–227; sequence SRVSDYKHHWSD. Over 216 to 229 the chain is Extracellular; sequence SRVSDYKHHWSDVL. His-223 (nucleophile) is an active-site residue. Residues 230–250 form a helical membrane-spanning segment; it reads IGLIQGAVVAILVVLYVTDFF. Residues 251–282 lie on the Cytoplasmic side of the membrane; sequence KTTESNKERKEDSHTTLHETTNRQSYARNHEP. Residues 257 to 271 are compositionally biased toward basic and acidic residues; the sequence is KERKEDSHTTLHETT. The interval 257-282 is disordered; that stretch reads KERKEDSHTTLHETTNRQSYARNHEP. The span at 272–282 shows a compositional bias: polar residues; it reads NRQSYARNHEP.

The protein belongs to the PA-phosphatase related phosphoesterase family. In terms of assembly, forms functional homodimers and homooligomers that are not required for substrate recognition and catalytic activity. Can also form heterooligomers with PLPP2 and PLPP3. Post-translationally, N-glycosylated. N-linked sugars are of the complex type. N-glycosylation is not required for the phosphatase activity.

The protein localises to the cell membrane. The protein resides in the apical cell membrane. It is found in the membrane raft. Its subcellular location is the membrane. It localises to the caveola. The enzyme catalyses a 1,2-diacyl-sn-glycero-3-phosphate + H2O = a 1,2-diacyl-sn-glycerol + phosphate. It carries out the reaction 1,2-dihexadecanoyl-sn-glycero-3-phosphate + H2O = 1,2-dihexadecanoyl-sn-glycerol + phosphate. It catalyses the reaction 1,2-di-(9Z-octadecenoyl)-sn-glycero-3-phosphate + H2O = 1,2-di-(9Z-octadecenoyl)-sn-glycerol + phosphate. The catalysed reaction is a monoacyl-sn-glycero-3-phosphate + H2O = a monoacylglycerol + phosphate. The enzyme catalyses (9Z)-octadecenoyl-sn-glycero-3-phosphate + H2O = (9Z-octadecenoyl)-glycerol + phosphate. It carries out the reaction a 1-acyl-sn-glycero-3-phosphate + H2O = a 1-acyl-sn-glycerol + phosphate. It catalyses the reaction 1-(9Z-octadecenoyl)-sn-glycero-3-phosphate + H2O = 1-(9Z-octadecenoyl)-sn-glycerol + phosphate. The catalysed reaction is a 1,2-diacyl-sn-glycerol 3-diphosphate + H2O = a 1,2-diacyl-sn-glycero-3-phosphate + phosphate + H(+). The enzyme catalyses sphing-4-enine 1-phosphate + H2O = sphing-4-enine + phosphate. It carries out the reaction an N-acylsphing-4-enine 1-phosphate + H2O = an N-acylsphing-4-enine + phosphate. It catalyses the reaction N-(octanoyl)-sphing-4-enine-1-phosphate + H2O = N-octanoylsphing-4-enine + phosphate. The catalysed reaction is N-(9Z-octadecenoyl)-ethanolamine phosphate + H2O = N-(9Z-octadecenoyl) ethanolamine + phosphate. The enzyme catalyses 1-hexadecanoyl-2-(9Z-octadecenoyl)-sn-glycero-3-phosphate + H2O = 1-hexadecanoyl-2-(9Z-octadecenoyl)-sn-glycerol + phosphate. It participates in lipid metabolism; phospholipid metabolism. Its activity is regulated as follows. Magnesium-independent phospholipid phosphatase. Insensitive to N-ethylmaleimide. Magnesium-independent phospholipid phosphatase of the plasma membrane that catalyzes the dephosphorylation of a variety of glycerolipid and sphingolipid phosphate esters including phosphatidate/PA, lysophosphatidate/LPA, diacylglycerol pyrophosphate/DGPP, sphingosine 1-phosphate/S1P and ceramide 1-phosphate/C1P. Also acts on N-oleoyl ethanolamine phosphate/N-(9Z-octadecenoyl)-ethanolamine phosphate, a potential physiological compound. Through its extracellular phosphatase activity allows both the hydrolysis and the cellular uptake of these bioactive lipid mediators from the milieu, regulating signal transduction in different cellular processes. It is for instance essential for the extracellular hydrolysis of S1P and subsequent conversion into intracellular S1P. Involved in the regulation of inflammation, platelets activation, cell proliferation and migration among other processes. May also have an intracellular activity to regulate phospholipid-mediated signaling pathways. The polypeptide is Phospholipid phosphatase 1 (Rattus norvegicus (Rat)).